Here is a 482-residue protein sequence, read N- to C-terminus: Glutamate--tRNA ligase 2 (482 aa).

The 'HIGH' region signature appears at 8 to 18; sequence PSPTGQLHIGG. The 'KMSKS' region signature appears at 249–253; it reads KLSKR. Residue K252 coordinates ATP.

It belongs to the class-I aminoacyl-tRNA synthetase family. Glutamate--tRNA ligase type 1 subfamily. As to quaternary structure, monomer.

It localises to the cytoplasm. The catalysed reaction is tRNA(Glu) + L-glutamate + ATP = L-glutamyl-tRNA(Glu) + AMP + diphosphate. Functionally, catalyzes the attachment of glutamate to tRNA(Glu) in a two-step reaction: glutamate is first activated by ATP to form Glu-AMP and then transferred to the acceptor end of tRNA(Glu). The sequence is that of Glutamate--tRNA ligase 2 from Caldicellulosiruptor saccharolyticus (strain ATCC 43494 / DSM 8903 / Tp8T 6331).